The primary structure comprises 695 residues: Polyribonucleotide nucleotidyltransferase (695 aa).

Mg(2+)-binding residues include Asp488 and Asp494. The KH domain occupies 554 to 613 (PKTAVIKIQTDKIRDLIGKGGETIKGIISTSSASVDVDDNGNVNIFSNDQKSFDTAMQMV). An S1 motif domain is found at 623 to 690 (GKVYTGKVVK…DRGRIKLSRK (68 aa)).

It belongs to the polyribonucleotide nucleotidyltransferase family. In terms of assembly, component of the RNA degradosome, which is a multiprotein complex involved in RNA processing and mRNA degradation. Mg(2+) is required as a cofactor.

It is found in the cytoplasm. The catalysed reaction is RNA(n+1) + phosphate = RNA(n) + a ribonucleoside 5'-diphosphate. Its function is as follows. Involved in mRNA degradation. Catalyzes the phosphorolysis of single-stranded polyribonucleotides processively in the 3'- to 5'-direction. The sequence is that of Polyribonucleotide nucleotidyltransferase from Ruthia magnifica subsp. Calyptogena magnifica.